Reading from the N-terminus, the 187-residue chain is UPF0301 protein VC_0467 (187 aa).

The protein belongs to the UPF0301 (AlgH) family.

This Vibrio cholerae serotype O1 (strain ATCC 39315 / El Tor Inaba N16961) protein is UPF0301 protein VC_0467.